The chain runs to 797 residues: Interphotoreceptor matrix proteoglycan 1 (797 aa).

The first 20 residues, 1-20 (MYLETRRAIFVFWIFLQVQG), serve as a signal peptide directing secretion. Residues N42, N143, N191, and N215 are each glycosylated (N-linked (GlcNAc...) asparagine). Residues 232-354 (EEQRVELSVS…QPEIYLTATD (123 aa)) enclose the SEA 1 domain. T403, T421, T432, and T442 each carry an O-linked (GalNAc...) threonine glycan. The 114-residue stretch at 571-684 (RELVVFFSLR…YSLNIEPADQ (114 aa)) folds into the SEA 2 domain. N-linked (GlcNAc...) asparagine glycans are attached at residues N592 and N616. Positions 621–629 (KQLEILNFR) match the Heparin- and hyaluronan-binding motif. Residues N630 and N648 are each glycosylated (N-linked (GlcNAc...) asparagine).

Post-translationally, the N-terminus is blocked. Highly glycosylated (N- and O-linked carbohydrates and sialic acid). Expressed in the retina (at protein level). In the retina, specifically expressed by cone and rod photoreceptor cells. Localizes to cone and rod photoreceptor cells surrounding the interphotoreceptor matrix of the retina.

The protein resides in the cell projection. The protein localises to the cilium. It is found in the photoreceptor outer segment. It localises to the secreted. Its subcellular location is the extracellular space. The protein resides in the extracellular matrix. The protein localises to the interphotoreceptor matrix. It is found in the photoreceptor inner segment. Its function is as follows. Chondroitin sulfate-, heparin- and hyaluronan-binding protein. May serve to form a basic macromolecular scaffold comprising the insoluble interphotoreceptor matrix. This is Interphotoreceptor matrix proteoglycan 1 from Homo sapiens (Human).